A 335-amino-acid chain; its full sequence is tRNA N6-adenosine threonylcarbamoyltransferase (335 aa).

Residues histidine 111, histidine 115, and tyrosine 132 each coordinate Fe cation. Substrate contacts are provided by residues 132 to 136 (YVSGG), aspartate 164, glycine 177, glutamate 181, and asparagine 260. A Fe cation-binding site is contributed by aspartate 288.

Belongs to the KAE1 / TsaD family. In terms of assembly, monomer. Component of the KEOPS complex that consists of Kae1, Bud32, Cgi121 and Pcc1; the whole complex dimerizes. Requires Fe(2+) as cofactor.

It localises to the cytoplasm. The enzyme catalyses L-threonylcarbamoyladenylate + adenosine(37) in tRNA = N(6)-L-threonylcarbamoyladenosine(37) in tRNA + AMP + H(+). Its function is as follows. Required for the formation of a threonylcarbamoyl group on adenosine at position 37 (t(6)A37) in tRNAs that read codons beginning with adenine. Is a component of the KEOPS complex that is probably involved in the transfer of the threonylcarbamoyl moiety of threonylcarbamoyl-AMP (TC-AMP) to the N6 group of A37. Kae1 likely plays a direct catalytic role in this reaction, but requires other protein(s) of the complex to fulfill this activity. This is tRNA N6-adenosine threonylcarbamoyltransferase from Methanococcoides burtonii (strain DSM 6242 / NBRC 107633 / OCM 468 / ACE-M).